We begin with the raw amino-acid sequence, 465 residues long: Cysteine--tRNA ligase 2 (465 aa).

Cys-30 serves as a coordination point for Zn(2+). Residues 32–42 (ITVYDYCHVGH) carry the 'HIGH' region motif. Zn(2+)-binding residues include Cys-214, His-239, and Glu-243. Residues 271 to 275 (KMSKS) carry the 'KMSKS' region motif. Position 274 (Lys-274) interacts with ATP.

This sequence belongs to the class-I aminoacyl-tRNA synthetase family. In terms of assembly, monomer. Requires Zn(2+) as cofactor.

It localises to the cytoplasm. It catalyses the reaction tRNA(Cys) + L-cysteine + ATP = L-cysteinyl-tRNA(Cys) + AMP + diphosphate. The chain is Cysteine--tRNA ligase 2 from Burkholderia lata (strain ATCC 17760 / DSM 23089 / LMG 22485 / NCIMB 9086 / R18194 / 383).